The chain runs to 458 residues: VSLSSPTLYPLVSCEGALTDGNLVAMGCLARDFLPSSVTFSWSFKNNSEISSRTVRTFPVVKRGDKYMATSQVLVPSKDVLQGTEEYLVCKVQHSNSNRDLRVSFPVDSELPPNVSVFIPPRDSFSGSGTRKSRLICQATGFSPKQISVSWLRDGQKVESGVLTKPVEAETKGAGPATFSISSMLTITESDWLSQSLYTCRVDHRGIFFDKNVSMSSECSTTPSPGIQVFPIAPSFADTFLSKSARLICLVTDLTTYGSLNISWASHNGKALDTHMNITESHPNATFSAMGEASVCAEDWESGEQFTCTVTHADLPFPLKHTISKSREVAKHPPAVYVLPPAREQLVLRESATVTCLVKGFSPADVFVQWQQRGQPLSSDKYVTSAPAPEPQAPGLYFTHSTLTVTEEDWNSGETFTCVVGHEALPHMVTERTVDKSTGKPTLYNVSLIMSDTASTCY.

Positions V1–P106 are CH1. A disulfide bridge links C28 with C90. N46 and N114 each carry an N-linked (GlcNAc...) asparagine glycan. The CH2 stretch occupies residues V107 to T222. A disulfide bond links C137 and C200. Residues N212, N261, N277, and N284 are each glycosylated (N-linked (GlcNAc...) asparagine). A CH3 region spans residues P223–R327. 2 disulfides stabilise this stretch: C249–C308 and C356–C418. Residues E328 to Y458 are CH4. N445 carries N-linked (GlcNAc...) asparagine glycosylation.

Its subcellular location is the secreted. This is Ig mu chain C region secreted form from Oryctolagus cuniculus (Rabbit).